Here is a 400-residue protein sequence, read N- to C-terminus: Enoyl-[acyl-carrier-protein] reductase [NADH] (400 aa).

NAD(+) contacts are provided by residues 48 to 53 (GSSSGY), 74 to 75 (FE), 111 to 112 (DA), and 139 to 140 (LA). Tyrosine 225 serves as a coordination point for substrate. Catalysis depends on tyrosine 235, which acts as the Proton donor. Residues lysine 244 and 273-275 (VVT) contribute to the NAD(+) site.

It belongs to the TER reductase family. In terms of assembly, monomer.

It carries out the reaction a 2,3-saturated acyl-[ACP] + NAD(+) = a (2E)-enoyl-[ACP] + NADH + H(+). The protein operates within lipid metabolism; fatty acid biosynthesis. Its function is as follows. Involved in the final reduction of the elongation cycle of fatty acid synthesis (FAS II). Catalyzes the reduction of a carbon-carbon double bond in an enoyl moiety that is covalently linked to an acyl carrier protein (ACP). This Shewanella oneidensis (strain ATCC 700550 / JCM 31522 / CIP 106686 / LMG 19005 / NCIMB 14063 / MR-1) protein is Enoyl-[acyl-carrier-protein] reductase [NADH].